We begin with the raw amino-acid sequence, 255 residues long: MRHPLVMGNWKLNGSRHMVNELVANLRKELTGVAGCDVAIAPPEMYIDLAKRAAAGSHIMLGAQNVDLNLSGAFTGETSAEMLKDIGAQYIIIGHSERRTYHKESDELIAKKFAVLKEQGLTPVLCIGETEAENEAGKTEEVCARQIDAVLKTQGAAAFEGAVIAYEPVWAIGTGKSATPAQAQAVHKFIRDHIAKADAKIAEQVIIQYGGSVNASNAAELFAQPDIDGALVGGASLKADAFAVIVKAAEAAKQA.

9 to 11 (NWK) provides a ligand contact to substrate. His95 serves as the catalytic Electrophile. Glu167 functions as the Proton acceptor in the catalytic mechanism. Residues Gly173, Ser212, and 233–234 (GG) each bind substrate.

It belongs to the triosephosphate isomerase family. Homodimer.

The protein localises to the cytoplasm. The enzyme catalyses D-glyceraldehyde 3-phosphate = dihydroxyacetone phosphate. Its pathway is carbohydrate biosynthesis; gluconeogenesis. It participates in carbohydrate degradation; glycolysis; D-glyceraldehyde 3-phosphate from glycerone phosphate: step 1/1. Functionally, involved in the gluconeogenesis. Catalyzes stereospecifically the conversion of dihydroxyacetone phosphate (DHAP) to D-glyceraldehyde-3-phosphate (G3P). This is Triosephosphate isomerase from Salmonella agona (strain SL483).